A 1358-amino-acid chain; its full sequence is Phosphoinositide 3-kinase regulatory subunit 4 (1358 aa).

A lipid anchor (N-myristoyl glycine) is attached at Gly2. Positions 26-324 constitute a Protein kinase domain; that stretch reads FEYDKSLGST…AFPEVFYTFL (299 aa). Residues 32 to 40 and Lys53 contribute to the ATP site; that span reads LGSTRFFKV. Asp148 acts as the Proton acceptor in catalysis. 4 HEAT repeats span residues 413-450, 458-495, 572-610, and 612-648; these read ILLD…LVQE, IYPE…TALR, KAND…YVGW, and SSSI…LGLL. Phosphoserine is present on residues Ser808, Ser813, Ser853, and Ser865. Residues 875–899 are disordered; the sequence is LPKTSDHEVVPTGKSPRSESSAGVC. WD repeat units lie at residues 991–1030, 1040–1079, 1093–1134, 1139–1178, 1182–1223, and 1237–1278; these read EHKS…GKTT, RIGG…LPKS, KEDG…NAWT, LKSG…PISS, PSRA…RRLT, and PSPH…RSYV. A disordered region spans residues 1307-1326; sequence KQKVGPSDDTPRRGPESLPV. The span at 1315-1326 shows a compositional bias: basic and acidic residues; that stretch reads DTPRRGPESLPV. At Thr1316 the chain carries Phosphothreonine. One copy of the WD 7 repeat lies at 1327-1358; the sequence is GHHDIITDIATFQTTQGFIVTASRDGIVKVWK.

It belongs to the protein kinase superfamily. Ser/Thr protein kinase family. In terms of assembly, component of the PI3K (PI3KC3/PI3K-III/class III phosphatidylinositol 3-kinase) complex the core of which is composed of the catalytic subunit PIK3C3, the regulatory subunit PIK3R4 and BECN1 associating with additional regulatory/auxiliary subunits to form alternative complex forms. Alternative complex forms containing a fourth regulatory subunit in a mutually exclusive manner are PI3K complex I (PI3KC3-C1) containing ATG14, and PI3K complex II (PI3KC3-C2) containing UVRAG. PI3KC3-C1 displays a V-shaped architecture with PIK3R4 serving as a bridge between PIK3C3 and the ATG14:BECN1 subcomplex. Both, PI3KC3-C1 and PI3KC3-C2, can associate with further regulatory subunits, such as RUBCN, SH3GLB1/Bif-1, AMBRA1 and NRBF2. PI3KC3-C1 probably associates with PIK3CB. Interacts with RAB7A in the presence of PIK3C3/VPS34. Interacts with NRBF2. Interacts with ARMC3. It depends on Mn(2+) as a cofactor. In terms of processing, myristoylated. Post-translationally, probably autophosphorylated.

It localises to the late endosome. Its subcellular location is the cytoplasmic vesicle. The protein localises to the autophagosome. The protein resides in the membrane. The enzyme catalyses L-seryl-[protein] + ATP = O-phospho-L-seryl-[protein] + ADP + H(+). It catalyses the reaction L-threonyl-[protein] + ATP = O-phospho-L-threonyl-[protein] + ADP + H(+). Regulatory subunit of the PI3K complex that mediates formation of phosphatidylinositol 3-phosphate; different complex forms are believed to play a role in multiple membrane trafficking pathways: PI3KC3-C1 is involved in initiation of autophagosomes and PI3KC3-C2 in maturation of autophagosomes and endocytosis. Involved in regulation of degradative endocytic trafficking and cytokinesis, probably in the context of PI3KC3-C2. The sequence is that of Phosphoinositide 3-kinase regulatory subunit 4 (Pik3r4) from Rattus norvegicus (Rat).